We begin with the raw amino-acid sequence, 410 residues long: Indoleamine 2,3-dioxygenase nanC (410 aa).

A heme-binding site is contributed by H309.

The protein belongs to the indoleamine 2,3-dioxygenase family. It depends on heme as a cofactor.

It catalyses the reaction D-tryptophan + O2 = N-formyl-D-kynurenine. It carries out the reaction L-tryptophan + O2 = N-formyl-L-kynurenine. The protein operates within secondary metabolite biosynthesis. Its function is as follows. Indoleamine 2,3-dioxygenase; part of the gene cluster that mediates the biosynthesis of the benzazepine alkaloid nanangelenin A which contains an unprecedented 3,4-dihydro-1-benzazepine-2,5-dione-N-prenyl-N-acetoxy-anthranilamide scaffold. The first step of nanangelenin biosynthesis is catalyzed by the indoleamine 2,3-dioxygenase nanC which produces N-formyl-kynurenine through the catabolism of tryptophan. The two-module NRPS nanA then utilizes anthranilate (Ant) and L-kynurenine (L-Kyn) to assemble the dipeptide product nanangelenin B. The first adenylation domain of nanA (A1) loads anthranilate onto the T1 domain, while A2 loads kynurenine, generated through spontaneous nonenzymatic deformylation of the nanC-supplied N-formyl-kynurenine. The peptide bond formation between the tethered amino acids is catalyzed by the first condensation domain (C1) between anthranilate's carbonyl carbon and kynurenine's aliphatic primary amine. The second C domain (C2) catalyzes the final cyclization event between the aromatic amine of kynurenine and the tethered carbonyl carbon, yielding nanangelenin B. The terminal T3 domain enhances the catalytic efficiency of C2, suggesting the T2-tethered Ant-L-Kyn is transferred to T3 prior to cyclization by C2. Once released from nanA, nanangelenin B is then prenylated by the prenyltransferase nanD to form nanangelenin C. Nanangelenin C is then N-hydroxylated by the FAD-dependent monooxygenase nanF and further acetylated by the acetyltransferase nanB to yield nanangelenin F. Finally, the N-methyltransferase nanE methylates the amide nitrogen of 1-benzazepine to convert nanangelenin F into nanangelenin A. NanE is also able to methylate most of the intermediates of the pathway such as nanangelenin B and nanangelenin C to produce nanangelenin D and nanangelenin E, respectively. This chain is Indoleamine 2,3-dioxygenase nanC, found in Aspergillus nanangensis.